Consider the following 277-residue polypeptide: Release factor glutamine methyltransferase (277 aa).

Residues 119 to 123 (GTGCG), D142, W170, and N184 each bind S-adenosyl-L-methionine. 184-187 (NPPY) contributes to the substrate binding site.

This sequence belongs to the protein N5-glutamine methyltransferase family. PrmC subfamily.

The catalysed reaction is L-glutaminyl-[peptide chain release factor] + S-adenosyl-L-methionine = N(5)-methyl-L-glutaminyl-[peptide chain release factor] + S-adenosyl-L-homocysteine + H(+). In terms of biological role, methylates the class 1 translation termination release factors RF1/PrfA and RF2/PrfB on the glutamine residue of the universally conserved GGQ motif. This chain is Release factor glutamine methyltransferase, found in Buchnera aphidicola subsp. Baizongia pistaciae (strain Bp).